A 339-amino-acid chain; its full sequence is Sulfate/thiosulfate import ATP-binding protein CysA (339 aa).

Residues 3 to 237 (IAIRSVEKQF…PETAFVCGFV (235 aa)) form the ABC transporter domain. 35 to 42 (GPSGSGKT) is an ATP binding site.

Belongs to the ABC transporter superfamily. Sulfate/tungstate importer (TC 3.A.1.6) family. The complex is composed of two ATP-binding proteins (CysA), two transmembrane proteins (CysT and CysW) and a solute-binding protein (CysP).

It is found in the cell inner membrane. It carries out the reaction sulfate(out) + ATP + H2O = sulfate(in) + ADP + phosphate + H(+). It catalyses the reaction thiosulfate(out) + ATP + H2O = thiosulfate(in) + ADP + phosphate + H(+). Its function is as follows. Part of the ABC transporter complex CysAWTP involved in sulfate/thiosulfate import. Responsible for energy coupling to the transport system. In Caulobacter vibrioides (strain ATCC 19089 / CIP 103742 / CB 15) (Caulobacter crescentus), this protein is Sulfate/thiosulfate import ATP-binding protein CysA.